Reading from the N-terminus, the 146-residue chain is MGRLIFVSFGLLVVFLSLSGTAADCLSGWSSYEGHCYKPFNELKNWADAENFCTQQHAGGHLVSFQSSEEADFVVKLAFETFGHSIFWMGLSNVWNQCNWQWSNAAMLRYKAWAEESYCVYFKSTNNKWRSRSCRMMANFVCEFQV.

The signal sequence occupies residues 1–23 (MGRLIFVSFGLLVVFLSLSGTAA). Intrachain disulfides connect Cys25-Cys36, Cys53-Cys142, and Cys119-Cys134. Residues 32-143 (YEGHCYKPFN…CRMMANFVCE (112 aa)) enclose the C-type lectin domain.

This sequence belongs to the snaclec family. Heterodimer of subunits A and B2; disulfide-linked. Expressed by the venom gland.

The protein resides in the secreted. Its function is as follows. Anticoagulant protein which binds to the gamma-carboxyglutamic acid-domain regions of factors IX (F9) and factor X (F10) in the presence of calcium with a 1 to 1 stoichiometry. The sequence is that of Snaclec coagulation factor IX/factor X-binding protein subunit B2 from Trimeresurus stejnegeri (Chinese green tree viper).